The chain runs to 462 residues: Adenosylhomocysteinase (462 aa).

Residues T55, D128, and E188 each contribute to the substrate site. Residue 189 to 191 (TTT) participates in NAD(+) binding. 2 residues coordinate substrate: K218 and D222. Residues N223, 252–257 (GYGDVG), E275, N310, 331–333 (IGH), and N376 each bind NAD(+).

This sequence belongs to the adenosylhomocysteinase family. It depends on NAD(+) as a cofactor.

It is found in the cytoplasm. The catalysed reaction is S-adenosyl-L-homocysteine + H2O = L-homocysteine + adenosine. It functions in the pathway amino-acid biosynthesis; L-homocysteine biosynthesis; L-homocysteine from S-adenosyl-L-homocysteine: step 1/1. May play a key role in the regulation of the intracellular concentration of adenosylhomocysteine. The sequence is that of Adenosylhomocysteinase from Roseobacter denitrificans (strain ATCC 33942 / OCh 114) (Erythrobacter sp. (strain OCh 114)).